A 494-amino-acid polypeptide reads, in one-letter code: Poly(3-hydroxybutyrate) depolymerase (494 aa).

An N-terminal signal peptide occupies residues 1–25; that stretch reads MAFNFIRAAAAGAAMALCGVGSVHA. S45 acts as the Nucleophile in catalysis. Catalysis depends on charge relay system residues D132 and H166. Residues 347–431 form the Fibronectin type-III domain; it reads APTGVSTSGA…AAASGTTLAA (85 aa).

Belongs to the AB hydrolase superfamily. Lipase family.

Its subcellular location is the secreted. It catalyses the reaction [(3R)-hydroxybutanoate](n) + H2O = [(3R)-hydroxybutanoate](n-2) + (3R)-hydroxybutanoate dimer + H(+). The enzyme catalyses [(3R)-hydroxybutanoate](n) + H2O = [(3R)-hydroxybutanoate](n-1) + (R)-3-hydroxybutanoate + H(+). The catalysed reaction is (3R)-hydroxybutanoate dimer + H2O = 2 (R)-3-hydroxybutanoate + H(+). Its function is as follows. Catalyzes the hydrolysis of poly(3-hydroxybutyrate) (PHB) film, producing the monomer and dimer of 3-hydroxybutyrate (3HB), while the 3HB trimer and tetramer are not formed. The chain is Poly(3-hydroxybutyrate) depolymerase from Delftia acidovorans (Pseudomonas acidovorans).